A 30-amino-acid polypeptide reads, in one-letter code: Fimbrial assembly protein, serogroup B1 (30 aa).

The protein is Fimbrial assembly protein, serogroup B1 (fimB) of Dichelobacter nodosus (Bacteroides nodosus).